Here is an 827-residue protein sequence, read N- to C-terminus: 6-phosphofructo-2-kinase 1 (827 aa).

2 disordered regions span residues methionine 1 to alanine 97 and threonine 149 to isoleucine 175. Residues serine 31–arginine 41 show a composition bias toward low complexity. Basic and acidic residues predominate over residues serine 42–lysine 59. Residues threonine 72–alanine 97 are compositionally biased toward polar residues. Serine 92 is modified (phosphoserine). Position 157 is a phosphothreonine (threonine 157). Glycine 190 to serine 197 contacts ATP. Catalysis depends on residues aspartate 277 and cysteine 309. Beta-D-fructose 6-phosphate is bound at residue arginine 343. Serine 404 serves as the catalytic Phosphoserine intermediate. Glutamate 497 is an active-site residue. Histidine 565 acts as the Proton donor in catalysis. Phosphoserine is present on residues serine 644, serine 652, serine 659, and serine 667. 2 disordered regions span residues alanine 649–asparagine 704 and histidine 799–valine 827. The span at serine 671–glutamine 682 shows a compositional bias: low complexity. The segment covering proline 683–asparagine 704 has biased composition (polar residues).

It catalyses the reaction beta-D-fructose 6-phosphate + ATP = beta-D-fructose 2,6-bisphosphate + ADP + H(+). Phosphorylation results in the activation of the kinase activity. Its function is as follows. Synthesis of fructose 2,6-bisphosphate. The sequence is that of 6-phosphofructo-2-kinase 1 (PFK26) from Saccharomyces cerevisiae (strain ATCC 204508 / S288c) (Baker's yeast).